A 192-amino-acid chain; its full sequence is FMN-dependent NADH:quinone oxidoreductase 1 (192 aa).

Residues serine 9 and 15–17 (SYS) contribute to the FMN site.

This sequence belongs to the azoreductase type 1 family. In terms of assembly, homodimer. The cofactor is FMN.

The catalysed reaction is 2 a quinone + NADH + H(+) = 2 a 1,4-benzosemiquinone + NAD(+). It catalyses the reaction N,N-dimethyl-1,4-phenylenediamine + anthranilate + 2 NAD(+) = 2-(4-dimethylaminophenyl)diazenylbenzoate + 2 NADH + 2 H(+). Quinone reductase that provides resistance to thiol-specific stress caused by electrophilic quinones. Functionally, also exhibits azoreductase activity. Catalyzes the reductive cleavage of the azo bond in aromatic azo compounds to the corresponding amines. This chain is FMN-dependent NADH:quinone oxidoreductase 1, found in Colwellia psychrerythraea (strain 34H / ATCC BAA-681) (Vibrio psychroerythus).